A 426-amino-acid polypeptide reads, in one-letter code: uncharacterized protein (426 aa).

Belongs to the serpin family.

This is an uncharacterized protein from Methanosarcina mazei (strain ATCC BAA-159 / DSM 3647 / Goe1 / Go1 / JCM 11833 / OCM 88) (Methanosarcina frisia).